The sequence spans 157 residues: Catabolic 3-dehydroquinase (157 aa).

Y27 functions as the Proton acceptor in the catalytic mechanism. The substrate site is built by N80, H86, and D93. Residue H106 is the Proton donor of the active site. Substrate is bound by residues 107 to 108 and R117; that span reads VS.

This sequence belongs to the type-II 3-dehydroquinase family. As to quaternary structure, homododecamer. Adopts a ring-like structure, composed of an arrangement of two hexameric rings stacked on top of one another.

The enzyme catalyses 3-dehydroquinate = 3-dehydroshikimate + H2O. It functions in the pathway aromatic compound metabolism; 3,4-dihydroxybenzoate biosynthesis; 3,4-dihydroxybenzoate from 3-dehydroquinate: step 1/2. In terms of biological role, is involved in the catabolism of quinate. Allows the utilization of quinate as carbon source via the beta-ketoadipate pathway. This chain is Catabolic 3-dehydroquinase, found in Pyricularia oryzae (strain 70-15 / ATCC MYA-4617 / FGSC 8958) (Rice blast fungus).